The primary structure comprises 115 residues: Rapid alkalinization factor (115 aa).

Positions 1-23 (MGVPSGLILCVLIGAFFISMAAA) are cleaved as a signal peptide. Positions 24 to 66 (GDSGAYDWVMPARSGGGCKGSIGECIAEEEEFELDSESNRRIL) are cleaved as a propeptide — removed in mature form. 2 disulfides stabilise this stretch: C84/C94 and C107/C113.

Proteolytically cleaved, probably by S1P, a subtilisin-like serine protease (subtilase).

The protein resides in the secreted. Cell signaling peptide that may regulate plant stress, growth, and development. Mediates a rapid alkalinization of extracellular space by mediating a transient increase in the cytoplasmic Ca(2+) concentration leading to a calcium-dependent signaling events through a cell surface receptor and a concomitant activation of some intracellular mitogen-activated protein kinases. Prevents root growth and seedling development in heterologous system. The polypeptide is Rapid alkalinization factor (RALF) (Nicotiana tabacum (Common tobacco)).